A 290-amino-acid polypeptide reads, in one-letter code: Acetylglutamate kinase (290 aa).

Substrate-binding positions include 65–66 (GG), Arg87, and Asn186.

It belongs to the acetylglutamate kinase family. ArgB subfamily.

The protein localises to the cytoplasm. The catalysed reaction is N-acetyl-L-glutamate + ATP = N-acetyl-L-glutamyl 5-phosphate + ADP. Its pathway is amino-acid biosynthesis; L-arginine biosynthesis; N(2)-acetyl-L-ornithine from L-glutamate: step 2/4. In terms of biological role, catalyzes the ATP-dependent phosphorylation of N-acetyl-L-glutamate. This is Acetylglutamate kinase from Mycobacterium sp. (strain KMS).